The chain runs to 590 residues: TPR repeat-containing protein PA4667 (590 aa).

TPR repeat units lie at residues 235 to 268 (VAPLLLRSRLLQSMKRSDEALPLLKAGIKEHPDD), 269 to 302 (KRVRLAYARLLVEQNRLDDAKAEFAGLVQQFPDD), 370 to 403 (LPAQLRQTDVLLKAGRVDEAAQRLDKARSEQPDY), 405 to 438 (IQLYLIEAEALSNNDQQEKAWQAIQEGLKQYPED), and 508 to 541 (PAILDSMGWINYRQGKLADAERYLRQALQRYPDH).

The protein is TPR repeat-containing protein PA4667 of Pseudomonas aeruginosa (strain ATCC 15692 / DSM 22644 / CIP 104116 / JCM 14847 / LMG 12228 / 1C / PRS 101 / PAO1).